A 93-amino-acid polypeptide reads, in one-letter code: Putative defensin-like protein 282 (93 aa).

An N-terminal signal peptide occupies residues 1–25 (MANATSFIALAYLLASALMTTVVLG). Cystine bridges form between cysteine 51-cysteine 83, cysteine 66-cysteine 90, and cysteine 72-cysteine 92.

Belongs to the DEFL family.

The protein localises to the secreted. This chain is Putative defensin-like protein 282, found in Arabidopsis thaliana (Mouse-ear cress).